A 360-amino-acid chain; its full sequence is Uptake hydrogenase small subunit (360 aa).

A signal peptide (tat-type signal) is located at residues 1–46; the sequence is MATAETFYDVIRRQGITRRSFTKFCSLTAASLGFGPGAATAMAEAL. [4Fe-4S] cluster is bound by residues Cys-62, Cys-65, Cys-160, Cys-194, His-232, Cys-235, Cys-260, and Cys-266. Residues Cys-275, Cys-294, and Cys-297 each contribute to the [3Fe-4S] cluster site.

This sequence belongs to the [NiFe]/[NiFeSe] hydrogenase small subunit family. In terms of assembly, heterodimer of a large and a small subunit. [4Fe-4S] cluster serves as cofactor. The cofactor is [3Fe-4S] cluster. Post-translationally, predicted to be exported by the Tat system. The position of the signal peptide cleavage has not been experimentally proven.

The protein resides in the cell membrane. The catalysed reaction is H2 + A = AH2. Its function is as follows. This enzyme recycles the H(2) produced by nitrogenase to increase the production of ATP and to protect nitrogenase against inhibition or damage by O(2) under carbon- or phosphate-limited conditions. The protein is Uptake hydrogenase small subunit (hupA) of Rhizobium leguminosarum bv. viciae.